A 96-amino-acid polypeptide reads, in one-letter code: Protein Vpr (96 aa).

Positions 1–42 (MEQAPEDQGPQREPYNDWTLELLEELKNEAVRHFPRIWLHSL) are homooligomerization. Residues Ser-79, Ser-94, and Ser-96 each carry the phosphoserine; by host modification.

Belongs to the HIV-1 VPR protein family. As to quaternary structure, homooligomer, may form homodimer. Interacts with p6-gag region of the Pr55 Gag precursor protein through a (Leu-X-X)4 motif near the C-terminus of the P6gag protein. Interacts with host UNG. May interact with host RAD23A/HHR23A. Interacts with host VPRBP/DCAF1, leading to hijack the CUL4A-RBX1-DDB1-DCAF1/VPRBP complex, mediating ubiquitination of host proteins such as TERT and ZGPAT and arrest of the cell cycle in G2 phase. In terms of processing, phosphorylated on several residues by host. These phosphorylations regulate VPR activity for the nuclear import of the HIV-1 pre-integration complex.

The protein resides in the virion. Its subcellular location is the host nucleus. It localises to the host extracellular space. Functionally, during virus replication, may deplete host UNG protein, and incude G2-M cell cycle arrest. Acts by targeting specific host proteins for degradation by the 26S proteasome, through association with the cellular CUL4A-DDB1 E3 ligase complex by direct interaction with host VPRPB/DCAF-1. Cell cycle arrest reportedly occurs within hours of infection and is not blocked by antiviral agents, suggesting that it is initiated by the VPR carried into the virion. Additionally, VPR induces apoptosis in a cell cycle dependent manner suggesting that these two effects are mechanistically linked. Detected in the serum and cerebrospinal fluid of AIDS patient, VPR may also induce cell death to bystander cells. During virus entry, plays a role in the transport of the viral pre-integration (PIC) complex to the host nucleus. This function is crucial for viral infection of non-dividing macrophages. May act directly at the nuclear pore complex, by binding nucleoporins phenylalanine-glycine (FG)-repeat regions. This Human immunodeficiency virus type 1 group M subtype B (strain 89.6) (HIV-1) protein is Protein Vpr.